Here is a 454-residue protein sequence, read N- to C-terminus: SH2 domain-containing protein 4A (454 aa).

4 disordered regions span residues 45–65 (AMER…NGKS), 107–131 (EQEA…KSQY), 152–177 (KEEL…SSSS), and 237–302 (RKSK…AYPQ). Over residues 107 to 120 (EQEAEEPRKTHSEE) the composition is skewed to basic and acidic residues. Phosphoserine is present on residues S118 and S124. Residues 240 to 259 (KAADEKRRSLAKQAREDYKR) are compositionally biased toward basic and acidic residues. Residues S261 and S315 each carry the phosphoserine modification. Residues 347 to 440 (WFHGILTLKK…LGKELLLYPC (94 aa)) form the SH2 domain.

In terms of assembly, interacts with ESR1. In terms of tissue distribution, ubiquitously expressed. Aberrantly expressed in some cancers.

The protein localises to the cytoplasm. Functionally, inhibits estrogen-induced cell proliferation by competing with PLCG for binding to ESR1, blocking the effect of estrogen on PLCG and repressing estrogen-induced proliferation. May play a role in T-cell development and function. This is SH2 domain-containing protein 4A (SH2D4A) from Homo sapiens (Human).